Reading from the N-terminus, the 207-residue chain is Succinyl-CoA:3-ketoacid coenzyme A transferase subunit B (207 aa).

Glutamate 43 is an active-site residue.

It belongs to the 3-oxoacid CoA-transferase subunit B family. As to quaternary structure, heterodimer of a subunit A and a subunit B.

The catalysed reaction is a 3-oxo acid + succinyl-CoA = a 3-oxoacyl-CoA + succinate. In Helicobacter pylori (strain ATCC 700392 / 26695) (Campylobacter pylori), this protein is Succinyl-CoA:3-ketoacid coenzyme A transferase subunit B (scoB).